A 281-amino-acid polypeptide reads, in one-letter code: 4-diphosphocytidyl-2-C-methyl-D-erythritol kinase (281 aa).

The active site involves K15. Residue 98–108 coordinates ATP; the sequence is PTGAGLGGGSS. Residue D140 is part of the active site.

This sequence belongs to the GHMP kinase family. IspE subfamily.

The enzyme catalyses 4-CDP-2-C-methyl-D-erythritol + ATP = 4-CDP-2-C-methyl-D-erythritol 2-phosphate + ADP + H(+). Its pathway is isoprenoid biosynthesis; isopentenyl diphosphate biosynthesis via DXP pathway; isopentenyl diphosphate from 1-deoxy-D-xylulose 5-phosphate: step 3/6. Functionally, catalyzes the phosphorylation of the position 2 hydroxy group of 4-diphosphocytidyl-2C-methyl-D-erythritol. The polypeptide is 4-diphosphocytidyl-2-C-methyl-D-erythritol kinase (Neisseria meningitidis serogroup C (strain 053442)).